A 353-amino-acid chain; its full sequence is Photosystem II protein D1 (353 aa).

Thr-2 carries the post-translational modification N-acetylthreonine. Thr-2 carries the post-translational modification Phosphothreonine. The next 3 membrane-spanning stretches (helical) occupy residues Tyr-29–Ser-46, His-118–Leu-133, and Trp-142–Ala-156. His-118 provides a ligand contact to chlorophyll a. Tyr-126 serves as a coordination point for pheophytin a. Residues Asp-170 and Glu-189 each coordinate [CaMn4O5] cluster. The helical transmembrane segment at Phe-197–Leu-218 threads the bilayer. Position 198 (His-198) interacts with chlorophyll a. A quinone is bound by residues His-215 and Ser-264–Phe-265. His-215 provides a ligand contact to Fe cation. Position 272 (His-272) interacts with Fe cation. Residues Phe-274–Leu-288 traverse the membrane as a helical segment. [CaMn4O5] cluster contacts are provided by His-332, Glu-333, Asp-342, and Ala-344. Positions Ala-345–Gly-353 are excised as a propeptide.

The protein belongs to the reaction center PufL/M/PsbA/D family. PSII is composed of 1 copy each of membrane proteins PsbA, PsbB, PsbC, PsbD, PsbE, PsbF, PsbH, PsbI, PsbJ, PsbK, PsbL, PsbM, PsbT, PsbX, PsbY, PsbZ, Psb30/Ycf12, at least 3 peripheral proteins of the oxygen-evolving complex and a large number of cofactors. It forms dimeric complexes. The D1/D2 heterodimer binds P680, chlorophylls that are the primary electron donor of PSII, and subsequent electron acceptors. It shares a non-heme iron and each subunit binds pheophytin, quinone, additional chlorophylls, carotenoids and lipids. D1 provides most of the ligands for the Mn4-Ca-O5 cluster of the oxygen-evolving complex (OEC). There is also a Cl(-1) ion associated with D1 and D2, which is required for oxygen evolution. The PSII complex binds additional chlorophylls, carotenoids and specific lipids. serves as cofactor. Tyr-161 forms a radical intermediate that is referred to as redox-active TyrZ, YZ or Y-Z. In terms of processing, C-terminally processed by CTPA; processing is essential to allow assembly of the oxygen-evolving complex and thus photosynthetic growth.

It is found in the plastid. Its subcellular location is the chloroplast thylakoid membrane. The enzyme catalyses 2 a plastoquinone + 4 hnu + 2 H2O = 2 a plastoquinol + O2. Its function is as follows. Photosystem II (PSII) is a light-driven water:plastoquinone oxidoreductase that uses light energy to abstract electrons from H(2)O, generating O(2) and a proton gradient subsequently used for ATP formation. It consists of a core antenna complex that captures photons, and an electron transfer chain that converts photonic excitation into a charge separation. The D1/D2 (PsbA/PsbD) reaction center heterodimer binds P680, the primary electron donor of PSII as well as several subsequent electron acceptors. This chain is Photosystem II protein D1, found in Lepidium virginicum (Virginia pepperweed).